We begin with the raw amino-acid sequence, 85 residues long: Large ribosomal subunit protein bL27 (85 aa).

Positions 1–22 are disordered; sequence MAHKKGASSTRNGRDSNAQRLG. Residues 7-19 show a composition bias toward polar residues; that stretch reads ASSTRNGRDSNAQ.

The protein belongs to the bacterial ribosomal protein bL27 family.

The chain is Large ribosomal subunit protein bL27 (rpmA) from Streptomyces griseus.